Consider the following 557-residue polypeptide: Protein NRT1/ PTR FAMILY 5.14 (557 aa).

2 consecutive transmembrane segments (helical) span residues 35–55 and 78–98; these read AALF…GIGS and AWSG…DAFL. Residue threonine 103 is modified to Phosphothreonine. 10 helical membrane-spanning segments follow: residues 104 to 124, 133 to 153, 183 to 203, 209 to 229, 320 to 340, 357 to 377, 401 to 421, 443 to 463, 479 to 499, and 526 to 546; these read IIIS…SAFL, SSTS…VAIG, FFNW…LVVV, FSWA…LVLF, IPVW…MTFF, IPPA…VPIY, IGTG…VEFK, IWWL…TLVG, IGLA…SLLI, and YFYW…LFIS.

It belongs to the major facilitator superfamily. Proton-dependent oligopeptide transporter (POT/PTR) (TC 2.A.17) family. As to expression, expressed in roots.

The protein resides in the membrane. The sequence is that of Protein NRT1/ PTR FAMILY 5.14 (NPF5.14) from Arabidopsis thaliana (Mouse-ear cress).